An 848-amino-acid chain; its full sequence is ATP-dependent RNA helicase dbp10 (848 aa).

The tract at residues 22 to 43 (DIATDNQKDKHENVGENVSDED) is disordered. A Q motif motif is present at residues 69–97 (SNFQSMGLNQTLLRAIFKKGFKAPTPIQR). The region spanning 100-272 (IPLLLEGRDV…KAGLQDPVLV (173 aa)) is the Helicase ATP-binding domain. Position 113-120 (113-120 (ARTGSGKT)) interacts with ATP. The short motif at 220–223 (DEAD) is the DEAD box element. The Helicase C-terminal domain maps to 330 to 480 (RKRALELALK…TSSKQVKTDS (151 aa)). The interval 610–650 (NKVKPKGIKSEVASDKITDSSPGNMSEASESELEEVFKNPK) is disordered. A compositionally biased stretch (basic and acidic residues) spans 617–627 (IKSEVASDKIT). A compositionally biased stretch (polar residues) spans 628–637 (DSSPGNMSEA). Phosphoserine occurs at positions 638, 733, and 736. The segment at 768–813 (ANDSPIRENKRYKHNKLQTPKPADKFRDNYHKQNKRNREAKERGIG) is disordered. Over residues 789–812 (PADKFRDNYHKQNKRNREAKERGI) the composition is skewed to basic and acidic residues.

The protein belongs to the DEAD box helicase family. DDX54/DBP10 subfamily.

Its subcellular location is the nucleus. It localises to the nucleolus. The enzyme catalyses ATP + H2O = ADP + phosphate + H(+). Its function is as follows. ATP-binding RNA helicase involved in the biogenesis of 60S ribosomal subunits and is required for the normal formation of 25S and 5.8S rRNAs. The polypeptide is ATP-dependent RNA helicase dbp10 (dbp10) (Schizosaccharomyces pombe (strain 972 / ATCC 24843) (Fission yeast)).